The chain runs to 175 residues: Crossover junction endodeoxyribonuclease RuvC (175 aa).

Residues Asp-12, Glu-72, and Asp-144 contribute to the active site. The Mg(2+) site is built by Asp-12, Glu-72, and Asp-144.

It belongs to the RuvC family. In terms of assembly, homodimer which binds Holliday junction (HJ) DNA. The HJ becomes 2-fold symmetrical on binding to RuvC with unstacked arms; it has a different conformation from HJ DNA in complex with RuvA. In the full resolvosome a probable DNA-RuvA(4)-RuvB(12)-RuvC(2) complex forms which resolves the HJ. The cofactor is Mg(2+).

The protein localises to the cytoplasm. The enzyme catalyses Endonucleolytic cleavage at a junction such as a reciprocal single-stranded crossover between two homologous DNA duplexes (Holliday junction).. Its function is as follows. The RuvA-RuvB-RuvC complex processes Holliday junction (HJ) DNA during genetic recombination and DNA repair. Endonuclease that resolves HJ intermediates. Cleaves cruciform DNA by making single-stranded nicks across the HJ at symmetrical positions within the homologous arms, yielding a 5'-phosphate and a 3'-hydroxyl group; requires a central core of homology in the junction. The consensus cleavage sequence is 5'-(A/T)TT(C/G)-3'. Cleavage occurs on the 3'-side of the TT dinucleotide at the point of strand exchange. HJ branch migration catalyzed by RuvA-RuvB allows RuvC to scan DNA until it finds its consensus sequence, where it cleaves and resolves the cruciform DNA. This chain is Crossover junction endodeoxyribonuclease RuvC, found in Beijerinckia indica subsp. indica (strain ATCC 9039 / DSM 1715 / NCIMB 8712).